The primary structure comprises 508 residues: Bifunctional purine biosynthesis protein PurH (508 aa).

The MGS-like domain occupies 1-145 (MTKRALISVS…KNHQYVTVIV (145 aa)).

The protein belongs to the PurH family.

The catalysed reaction is (6R)-10-formyltetrahydrofolate + 5-amino-1-(5-phospho-beta-D-ribosyl)imidazole-4-carboxamide = 5-formamido-1-(5-phospho-D-ribosyl)imidazole-4-carboxamide + (6S)-5,6,7,8-tetrahydrofolate. It catalyses the reaction IMP + H2O = 5-formamido-1-(5-phospho-D-ribosyl)imidazole-4-carboxamide. It participates in purine metabolism; IMP biosynthesis via de novo pathway; 5-formamido-1-(5-phospho-D-ribosyl)imidazole-4-carboxamide from 5-amino-1-(5-phospho-D-ribosyl)imidazole-4-carboxamide (10-formyl THF route): step 1/1. It functions in the pathway purine metabolism; IMP biosynthesis via de novo pathway; IMP from 5-formamido-1-(5-phospho-D-ribosyl)imidazole-4-carboxamide: step 1/1. The chain is Bifunctional purine biosynthesis protein PurH from Lysinibacillus sphaericus (strain C3-41).